The chain runs to 526 residues: Exodeoxyribonuclease 7 large subunit (526 aa).

The interval 497-526 (AMTTEGGTPPAGAKKRSTKPAEPPKQGSLF) is disordered.

This sequence belongs to the XseA family. As to quaternary structure, heterooligomer composed of large and small subunits.

The protein resides in the cytoplasm. It catalyses the reaction Exonucleolytic cleavage in either 5'- to 3'- or 3'- to 5'-direction to yield nucleoside 5'-phosphates.. Functionally, bidirectionally degrades single-stranded DNA into large acid-insoluble oligonucleotides, which are then degraded further into small acid-soluble oligonucleotides. The polypeptide is Exodeoxyribonuclease 7 large subunit (Rhizobium johnstonii (strain DSM 114642 / LMG 32736 / 3841) (Rhizobium leguminosarum bv. viciae)).